We begin with the raw amino-acid sequence, 118 residues long: Probable FK506-binding protein (118 aa).

The PPIase FKBP-type domain maps to 33 to 118; sequence GGEVEVHYVG…LVFIIDLISA (86 aa).

The protein belongs to the FKBP-type PPIase family.

It catalyses the reaction [protein]-peptidylproline (omega=180) = [protein]-peptidylproline (omega=0). In terms of biological role, PPIases accelerate the folding of proteins. In Corynebacterium glutamicum (strain ATCC 13032 / DSM 20300 / JCM 1318 / BCRC 11384 / CCUG 27702 / LMG 3730 / NBRC 12168 / NCIMB 10025 / NRRL B-2784 / 534), this protein is Probable FK506-binding protein.